The sequence spans 199 residues: Putative pseudouridine methyltransferase (199 aa).

Residues M132 and C186 each contribute to the S-adenosyl-L-methionine site.

The protein belongs to the methyltransferase superfamily. TrmY family.

Its subcellular location is the cytoplasm. The sequence is that of Putative pseudouridine methyltransferase from Vibrio atlanticus (strain LGP32) (Vibrio splendidus (strain Mel32)).